Consider the following 511-residue polypeptide: LEM domain-containing protein 2 (511 aa).

Ala-2 is modified (N-acetylalanine). The LEM domain maps to 2 to 42 (AGLSDLELRRELQALGFQPGPITDTTRNVYRNKLRRLRGEA). 2 disordered regions span residues 18-110 (FQPG…SDAS) and 128-206 (GLSY…AGRT). The segment covering 38-80 (LRGEARLRDDERLREDAGPREDAGPRGPERQREEARLREEAPL) has biased composition (basic and acidic residues). The interval 80–112 (LRARPAASVLRSEPWPLSPSPPAPSAASDASGP) is interaction with lamin A/C complexes. Residues 80–141 (LRARPAASVL…PPHAGPGPLR (62 aa)) form a required for nuclear retention and interaction with LMNA isoform C region. Low complexity-rich tracts occupy residues 81–94 (RARP…SEPW) and 172–183 (APPSASARPHSA). The next 2 helical transmembrane spans lie at 221–241 (LLLW…WVKM) and 385–405 (VTHV…LILL). The interval 403–511 (ILLKYRWRKL…KPSSFSDSER (109 aa)) is winged-Helix (WH). 3 positions are modified to phosphoserine: Ser-505, Ser-507, and Ser-509.

As to quaternary structure, interacts (via N-terminus) with LMNA isoform C (via C-terminus) (in vitro). Interacts (via LEM domain) with BANF1. Interacts (via C-terminus) with CHMP7. Interacts (via N-terminus) with tubulin; the interaction causes microtubule bundling and stabilization (in vitro). Phosphorylated; strongly phosphorylated in mitosis compared to G1/S. As to expression, ubiquitously expressed, including liver, brain, heart, skeletal muscle, lung, testis, spleen, kidney and white adipose tissue.

It is found in the nucleus inner membrane. The protein resides in the nucleus envelope. Its subcellular location is the cytoplasm. The protein localises to the cytoskeleton. It localises to the spindle. In terms of biological role, nuclear lamina-associated inner nuclear membrane protein that is involved in nuclear structure organization and maintenance of nuclear envelope (NE) integrity and NE reformation after mitosis. Plays a role as transmembrane adapter for the endosomal sorting complexes required for transport (ESCRT), and is thereby involved in ESCRT-mediated NE reformation. Promotes ESCRT-mediated NE closure by recruiting CHMP7 and downstream ESCRT-III proteins IST1/CHMP8 and CHMP2A to the reforming NE during anaphase. During nuclear reassembly, condenses into a liquid-like coating around microtubule spindles and coassembles with CHMP7 to form a macromolecular O-ring seal at the confluence between membranes, chromatin, and the spindle to facilitate early nuclear sealing. Plays a role in the organization of heterochromatin associated with the NE and in the maintenance of NE organization under mechanical stress. Required for embryonic development and is involved in regulation of several signaling pathways such as MAPK and AKT. Required for myoblast differentiation involving regulation of ERK signaling. Essential for cardiac homeostasis and proper heart function. The sequence is that of LEM domain-containing protein 2 (Lemd2) from Mus musculus (Mouse).